Reading from the N-terminus, the 262-residue chain is Adenosylcobinamide-GDP ribazoletransferase (262 aa).

Helical transmembrane passes span 43–63 (YFGLVGLLVGLLSAIVFWLTQ), 66–86 (LPAGVSVLLAMLVGVLLTGGF), 120–140 (GALALILALLLKWQLLVELAL), 146–166 (AGSALIVAHTVSRVVSASIIF), 191–211 (LLILIASGVLVLLFLKGLAAL), and 242–262 (AAQQIAEIVCYFVLLVVGNIL).

This sequence belongs to the CobS family. The cofactor is Mg(2+).

Its subcellular location is the cell inner membrane. It catalyses the reaction alpha-ribazole + adenosylcob(III)inamide-GDP = adenosylcob(III)alamin + GMP + H(+). It carries out the reaction alpha-ribazole 5'-phosphate + adenosylcob(III)inamide-GDP = adenosylcob(III)alamin 5'-phosphate + GMP + H(+). It functions in the pathway cofactor biosynthesis; adenosylcobalamin biosynthesis; adenosylcobalamin from cob(II)yrinate a,c-diamide: step 7/7. Joins adenosylcobinamide-GDP and alpha-ribazole to generate adenosylcobalamin (Ado-cobalamin). Also synthesizes adenosylcobalamin 5'-phosphate from adenosylcobinamide-GDP and alpha-ribazole 5'-phosphate. This Shewanella baltica (strain OS185) protein is Adenosylcobinamide-GDP ribazoletransferase.